Consider the following 181-residue polypeptide: Nedd8-conjugating enzyme UbcE2M (181 aa).

Interaction with Uba3 stretches follow at residues 4–7 and 24–54; these read LFTL and ASAA…PNDL. In terms of domain architecture, UBC core spans 26 to 170; sequence AAQLRIQKDI…VKKAMRGGCV (145 aa). The active-site Glycyl thioester intermediate is the Cys-108.

Belongs to the ubiquitin-conjugating enzyme family. UBC12 subfamily. As to quaternary structure, interacts with Uba3. As to expression, expressed in the wing disk.

The enzyme catalyses [E1 NEDD8-activating enzyme]-S-[NEDD8 protein]-yl-L-cysteine + [E2 NEDD8-conjugating enzyme]-L-cysteine = [E1 NEDD8-activating enzyme]-L-cysteine + [E2 NEDD8-conjugating enzyme]-S-[NEDD8-protein]-yl-L-cysteine.. The protein operates within protein modification; protein neddylation. Accepts the ubiquitin-like protein Nedd8 from the Uba3-APP-BP1 E1 complex and catalyzes its covalent attachment to other proteins. Required for Cul1 and Cul3 neddylation. Negatively regulates full-length ci stability and hedgehog signaling. This chain is Nedd8-conjugating enzyme UbcE2M, found in Drosophila melanogaster (Fruit fly).